Consider the following 312-residue polypeptide: Formate dehydrogenase iron-sulfur subunit (312 aa).

4Fe-4S ferredoxin-type domains are found at residues Ile-35–Asn-65, Leu-97–Asn-129, Gly-130–Glu-159, and Tyr-164–Lys-195. 16 residues coordinate [4Fe-4S] cluster: Cys-44, Cys-47, Cys-50, Cys-54, Cys-106, Cys-109, Cys-114, Cys-118, Cys-139, Cys-142, Cys-145, Cys-149, Cys-166, Cys-169, Cys-181, and Cys-185.

In terms of assembly, formate dehydrogenase is a membrane-bound complex, formed by subunits alpha, beta and gamma. [4Fe-4S] cluster serves as cofactor.

Its subcellular location is the cell membrane. Its function is as follows. Allows to use formate as major electron donor during aerobic respiration. The beta chain is an electron transfer unit containing 4 cysteine clusters involved in the formation of iron-sulfur centers. Electrons are transferred from the gamma chain to the molybdenum cofactor of the alpha subunit. This is Formate dehydrogenase iron-sulfur subunit (fdxH) from Haemophilus influenzae (strain ATCC 51907 / DSM 11121 / KW20 / Rd).